We begin with the raw amino-acid sequence, 138 residues long: Small ribosomal subunit protein uS9 (138 aa).

Belongs to the universal ribosomal protein uS9 family.

This chain is Small ribosomal subunit protein uS9 (rps9), found in Sulfolobus acidocaldarius (strain ATCC 33909 / DSM 639 / JCM 8929 / NBRC 15157 / NCIMB 11770).